The following is a 170-amino-acid chain: Glycine cleavage system H protein, mitochondrial (170 aa).

The transit peptide at 1-47 (MLRTTRLWTTRMPTVSKLFLRNSSGNALNKNKLPFLYSSQGPQAVRY) directs the protein to the mitochondrion. The 83-residue stretch at 61–143 (TAFVGITKYA…MGDGWLVKMK (83 aa)) folds into the Lipoyl-binding domain. Lys102 carries the N6-lipoyllysine modification.

The protein belongs to the GcvH family. As to quaternary structure, component of the glycine decarboxylase complex (GDC), which is composed of four proteins: P, T, L and H. (R)-lipoate is required as a cofactor.

It is found in the mitochondrion. The glycine cleavage system (glycine decarboxylase complex) catalyzes the degradation of glycine. The H protein shuttles the methylamine group of glycine from the P protein to the T protein. The polypeptide is Glycine cleavage system H protein, mitochondrial (GCV3) (Saccharomyces cerevisiae (strain ATCC 204508 / S288c) (Baker's yeast)).